Here is a 1249-residue protein sequence, read N- to C-terminus: Myosin-1 (1249 aa).

Positions 1–42 (MGHSRRPAGGEKKSRGFGRSKAVADVGDGRQTGGKPQVKKAT) are disordered. The Myosin motor domain maps to 51 to 730 (IGVSDLTLLS…TLFALEAMRD (680 aa)). ATP is bound at residue 144-151 (GESGAGKT). Ser372 is modified (phosphoserine). An actin-binding region spans residues 419 to 501 (SIGILDIYGF…PGVFAALNDA (83 aa)). IQ domains lie at 734-754 (HNMA…RTEC) and 755-780 (AIRI…QGHQ). The TH1 domain occupies 788–978 (RRRMSLLGSR…TIHTGPGEPA (191 aa)). 2 disordered regions span residues 962–1079 (DDSY…PKKP) and 1126–1249 (WTPE…DDDW). The span at 1021 to 1035 (AAQPLPRATPQPAEP) shows a compositional bias: pro residues. A compositionally biased stretch (low complexity) spans 1036-1051 (QPAARAVPQPVAAVAA). Pro residues-rich tracts occupy residues 1064–1077 (APPP…PAPK) and 1139–1150 (TPKPAPPPPPAA). The SH3 domain occupies 1076 to 1137 (PKKPTAKVLY…PEAYLEEQVA (62 aa)). The span at 1151-1169 (PRSTPAPATNGAAAAAKAK) shows a compositional bias: low complexity. Positions 1200–1221 (VSMNSHDSSGGSGRGTPNSMSN) are enriched in polar residues. Residues 1222-1231 (ASLAGGLAEA) show a composition bias toward low complexity.

It belongs to the TRAFAC class myosin-kinesin ATPase superfamily. Myosin family. Post-translationally, phosphorylation of the TEDS site (Ser-372) is required for the polarization of the actin cytoskeleton. Phosphorylation probably activates the myosin-I ATPase activity.

Its subcellular location is the cytoplasm. It is found in the cytoskeleton. The protein localises to the actin patch. Type-I myosin implicated in the organization of the actin cytoskeleton. Required for proper actin cytoskeleton polarization. At the cell cortex, assembles in patch-like structures together with proteins from the actin-polymerizing machinery and promotes actin assembly. Functions as actin nucleation-promoting factor (NPF) for the Arp2/3 complex. Plays an important role in polarized growth, spore germination, hyphal morphogenesis, and septal wall formation. This chain is Myosin-1 (myoA), found in Aspergillus fumigatus (strain ATCC MYA-4609 / CBS 101355 / FGSC A1100 / Af293) (Neosartorya fumigata).